A 494-amino-acid polypeptide reads, in one-letter code: Glycerol kinase (494 aa).

Threonine 12 contributes to the ADP binding site. Positions 12, 13, and 14 each coordinate ATP. Threonine 12 provides a ligand contact to sn-glycerol 3-phosphate. ADP is bound at residue arginine 16. Sn-glycerol 3-phosphate is bound by residues arginine 82, glutamate 83, tyrosine 134, and aspartate 241. Glycerol-binding residues include arginine 82, glutamate 83, tyrosine 134, aspartate 241, and glutamine 242. Residues threonine 263 and glycine 306 each contribute to the ADP site. Positions 263, 306, 310, and 407 each coordinate ATP. Glycine 407 contacts ADP.

Belongs to the FGGY kinase family.

It carries out the reaction glycerol + ATP = sn-glycerol 3-phosphate + ADP + H(+). The protein operates within polyol metabolism; glycerol degradation via glycerol kinase pathway; sn-glycerol 3-phosphate from glycerol: step 1/1. With respect to regulation, inhibited by fructose 1,6-bisphosphate (FBP). Key enzyme in the regulation of glycerol uptake and metabolism. Catalyzes the phosphorylation of glycerol to yield sn-glycerol 3-phosphate. The polypeptide is Glycerol kinase (Brachyspira hyodysenteriae (strain ATCC 49526 / WA1)).